The following is an 83-amino-acid chain: Translation initiation factor IF-1 (83 aa).

The S1-like domain maps to 1–72 (MAKEELIEMQ…SKGRITFRHL (72 aa)).

Belongs to the IF-1 family. As to quaternary structure, component of the 30S ribosomal translation pre-initiation complex which assembles on the 30S ribosome in the order IF-2 and IF-3, IF-1 and N-formylmethionyl-tRNA(fMet); mRNA recruitment can occur at any time during PIC assembly.

Its subcellular location is the cytoplasm. Its function is as follows. One of the essential components for the initiation of protein synthesis. Stabilizes the binding of IF-2 and IF-3 on the 30S subunit to which N-formylmethionyl-tRNA(fMet) subsequently binds. Helps modulate mRNA selection, yielding the 30S pre-initiation complex (PIC). Upon addition of the 50S ribosomal subunit IF-1, IF-2 and IF-3 are released leaving the mature 70S translation initiation complex. The polypeptide is Translation initiation factor IF-1 (Verminephrobacter eiseniae (strain EF01-2)).